We begin with the raw amino-acid sequence, 400 residues long: Subtilisin-like protease 7 (400 aa).

The signal sequence occupies residues 1–20 (MGFITKAIPLALAAASVING). A propeptide spanning residues 21–119 (AEILETRAGV…IERDARVQIN (99 aa)) is cleaved from the precursor. Positions 36 to 118 (KYIVVMNDGI…YIERDARVQI (83 aa)) constitute an Inhibitor I9 domain. The Peptidase S8 domain maps to 129 to 400 (SWGLARVGSK…SKLINNGSGM (272 aa)). Residues Asp161 and His192 each act as charge relay system in the active site. A glycan (N-linked (GlcNAc...) asparagine) is linked at Asn252. The Charge relay system role is filled by Ser346. A glycan (N-linked (GlcNAc...) asparagine) is linked at Asn396.

It belongs to the peptidase S8 family.

The protein resides in the secreted. Functionally, secreted subtilisin-like serine protease with keratinolytic activity that contributes to pathogenicity. The polypeptide is Subtilisin-like protease 7 (SUB7) (Trichophyton violaceum).